Consider the following 201-residue polypeptide: Recombination protein RecR (201 aa).

A C4-type zinc finger spans residues 60–75 (CSCCGNVDTSDPCTIC). Residues 83–178 (ATLIVVEDVS…RVTRLAHGVP (96 aa)) enclose the Toprim domain.

It belongs to the RecR family.

In terms of biological role, may play a role in DNA repair. It seems to be involved in an RecBC-independent recombinational process of DNA repair. It may act with RecF and RecO. This Brucella abortus biovar 1 (strain 9-941) protein is Recombination protein RecR.